The sequence spans 475 residues: Zinc-regulated GTPase metalloprotein activator 1 (475 aa).

A GTP-binding site is contributed by 50–57; it reads GFLGSGKT. Residues Cys116, Cys118, and Cys119 each coordinate Zn(2+). The CXCC motif signature appears at 116–119; sequence CICC. GTP-binding positions include 119–123 and 229–232; these read CTMRE and NKCD. Positions 302 to 420 constitute a CobW C-terminal domain; sequence IKSFIYKARR…LIESELNNCL (119 aa). Positions 440–467 form a coiled coil; it reads IQLDEELEEEELEEEEEEGEYKDEIEMK. Acidic residues predominate over residues 445-460; it reads ELEEEELEEEEEEGEY. The segment at 445–475 is disordered; that stretch reads ELEEEELEEEEEEGEYKDEIEMKVDGSKFKK. Residues 461 to 475 are compositionally biased toward basic and acidic residues; the sequence is KDEIEMKVDGSKFKK.

The protein belongs to the SIMIBI class G3E GTPase family. ZNG1 subfamily.

It carries out the reaction GTP + H2O = GDP + phosphate + H(+). In terms of biological role, zinc chaperone that directly transfers zinc cofactor to target metalloproteins, thereby activating them. Zinc is transferred from the CXCC motif in the GTPase domain to the zinc binding site in target proteins in a process requiring GTP hydrolysis. In Dictyostelium discoideum (Social amoeba), this protein is Zinc-regulated GTPase metalloprotein activator 1.